The following is a 912-amino-acid chain: Protein translocase subunit SecA (912 aa).

ATP contacts are provided by residues Gln-87, Gly-105–Thr-109, and Asp-508. A disordered region spans residues Gln-855 to Ser-912. Zn(2+) contacts are provided by Cys-896, Cys-898, Cys-907, and His-908. Residues Lys-902–Ser-912 show a composition bias toward basic residues.

It belongs to the SecA family. As to quaternary structure, monomer and homodimer. Part of the essential Sec protein translocation apparatus which comprises SecA, SecYEG and auxiliary proteins SecDF-YajC and YidC. Zn(2+) is required as a cofactor.

The protein resides in the cell inner membrane. The protein localises to the cytoplasm. It catalyses the reaction ATP + H2O + cellular proteinSide 1 = ADP + phosphate + cellular proteinSide 2.. Functionally, part of the Sec protein translocase complex. Interacts with the SecYEG preprotein conducting channel. Has a central role in coupling the hydrolysis of ATP to the transfer of proteins into and across the cell membrane, serving both as a receptor for the preprotein-SecB complex and as an ATP-driven molecular motor driving the stepwise translocation of polypeptide chains across the membrane. This Xanthomonas campestris pv. campestris (strain B100) protein is Protein translocase subunit SecA.